The following is a 539-amino-acid chain: E3 ubiquitin-protein ligase arc-1 (539 aa).

The segment at 6-53 (CNVCNEEYSARDPLKCPRVLTGCGHTICHNCAISIAGRNSSIFCPFDR) adopts an RING-type zinc-finger fold. The segment at 103–149 (LLNLECDEDSEHVAVIYCTVCDSNLCERCSESTHSTNVLSKHRRIPL) adopts a B box-type zinc-finger fold. Residues 369 to 539 (ESRVVLLGLD…LSRLNGTCPV (171 aa)) are ARF-like. Residues 376–383 (GLDGAGKT), 422–426 (DVGGL), and 481–484 (NRKD) each bind GTP.

The protein in the C-terminal section; belongs to the small GTPase superfamily. Arf family.

It catalyses the reaction S-ubiquitinyl-[E2 ubiquitin-conjugating enzyme]-L-cysteine + [acceptor protein]-L-lysine = [E2 ubiquitin-conjugating enzyme]-L-cysteine + N(6)-ubiquitinyl-[acceptor protein]-L-lysine.. Its pathway is protein modification; protein ubiquitination. Acts as an E3 ubiquitin-protein ligase. The chain is E3 ubiquitin-protein ligase arc-1 (arc-1) from Caenorhabditis elegans.